A 106-amino-acid chain; its full sequence is NADH-quinone oxidoreductase subunit K (106 aa).

Helical transmembrane passes span 8-28 (IGIE…VFGV), 35-55 (IIVF…FVAF), and 66-86 (VFVF…LAIL).

Belongs to the complex I subunit 4L family. NDH-1 is composed of 14 different subunits. Subunits NuoA, H, J, K, L, M, N constitute the membrane sector of the complex.

It is found in the cell inner membrane. The catalysed reaction is a quinone + NADH + 5 H(+)(in) = a quinol + NAD(+) + 4 H(+)(out). Functionally, NDH-1 shuttles electrons from NADH, via FMN and iron-sulfur (Fe-S) centers, to quinones in the respiratory chain. The immediate electron acceptor for the enzyme in this species is believed to be a menaquinone. Couples the redox reaction to proton translocation (for every two electrons transferred, four hydrogen ions are translocated across the cytoplasmic membrane), and thus conserves the redox energy in a proton gradient. The chain is NADH-quinone oxidoreductase subunit K from Flavobacterium johnsoniae (strain ATCC 17061 / DSM 2064 / JCM 8514 / BCRC 14874 / CCUG 350202 / NBRC 14942 / NCIMB 11054 / UW101) (Cytophaga johnsonae).